Consider the following 383-residue polypeptide: Protein salvador homolog 1 (383 aa).

Phosphoserine occurs at positions 94 and 136. 2 consecutive WW domains span residues 199-232 (LPLP…HPLE) and 234-267 (EGLP…HPCA). Residue threonine 210 is modified to Phosphothreonine. One can recognise an SARAH domain in the interval 321–368 (ILKWELFQLADLDTYQGMLKLLFMKELEQIVKMYEAYRQALLTELENR). A coiled-coil region spans residues 344 to 373 (MKELEQIVKMYEAYRQALLTELENRKQRQQ).

Homodimer. Stabilized through interaction with STK3/MST2 or STK4/MST1. Interacts (via SARAH domain) with isoform 1 of NEK2. Interacts with ESR1 only in the presence of STK3/MST2. Interacts with WTIP and AJUBA. Post-translationally, phosphorylated by STK3/MST2 and STK4/MST1. Phosphorylation is not required for SAV1 stability and may increase the number of protein binding sites on the scaffold molecule. Ubiquitously expressed in adult tissues with highest expression in the pancreas, aorta and interventricular septum and lowest expression in skeletal muscle. Expression was higher in fetal than in the adult heart. Expressed in various cell lines.

The protein localises to the nucleus. It localises to the cytoplasm. Its function is as follows. Regulator of STK3/MST2 and STK4/MST1 in the Hippo signaling pathway which plays a pivotal role in organ size control and tumor suppression by restricting proliferation and promoting apoptosis. The core of this pathway is composed of a kinase cascade wherein STK3/MST2 and STK4/MST1, in complex with its regulatory protein SAV1, phosphorylates and activates LATS1/2 in complex with its regulatory protein MOB1, which in turn phosphorylates and inactivates YAP1 oncoprotein and WWTR1/TAZ. Phosphorylation of YAP1 by LATS1/2 inhibits its translocation into the nucleus to regulate cellular genes important for cell proliferation, cell death, and cell migration. SAV1 is required for STK3/MST2 and STK4/MST1 activation and promotes cell-cycle exit and terminal differentiation in developing epithelial tissues. Plays a role in centrosome disjunction by regulating the localization of NEK2 to centrosomes, and its ability to phosphorylate CROCC and CEP250. In conjunction with STK3/MST2, activates the transcriptional activity of ESR1 through the modulation of its phosphorylation. The polypeptide is Protein salvador homolog 1 (Homo sapiens (Human)).